A 258-amino-acid chain; its full sequence is Acyl-[acyl-carrier-protein]--UDP-N-acetylglucosamine O-acyltransferase (258 aa).

The protein belongs to the transferase hexapeptide repeat family. LpxA subfamily. Homotrimer.

It is found in the cytoplasm. It carries out the reaction a (3R)-hydroxyacyl-[ACP] + UDP-N-acetyl-alpha-D-glucosamine = a UDP-3-O-[(3R)-3-hydroxyacyl]-N-acetyl-alpha-D-glucosamine + holo-[ACP]. The protein operates within glycolipid biosynthesis; lipid IV(A) biosynthesis; lipid IV(A) from (3R)-3-hydroxytetradecanoyl-[acyl-carrier-protein] and UDP-N-acetyl-alpha-D-glucosamine: step 1/6. Its function is as follows. Involved in the biosynthesis of lipid A, a phosphorylated glycolipid that anchors the lipopolysaccharide to the outer membrane of the cell. This is Acyl-[acyl-carrier-protein]--UDP-N-acetylglucosamine O-acyltransferase from Azotobacter vinelandii (strain DJ / ATCC BAA-1303).